Here is a 703-residue protein sequence, read N- to C-terminus: Antigen peptide transporter 2 (703 aa).

The Lumenal portion of the chain corresponds to 1–6 (MALSHP). A helical transmembrane segment spans residues 7–27 (RPWASLLLVDLALLGLLQSSL). Topologically, residues 28–56 (GTLLPPGLPGLWLEGTLRLGVLWGLLKVG) are cytoplasmic. Residues 57–77 (GLLRLVGTFLPLLCLTNPLFF) form a helical membrane-spanning segment. The Lumenal portion of the chain corresponds to 78-98 (SLRALVGSTMSTSVVRVASAS). The helical transmembrane segment at 99 to 119 (WGWLLADYGAVALSLAVWAVL) threads the bilayer. Residues 120 to 148 (SPAGAQEKEPGQENNRALMIRLLRLSKPD) lie on the Cytoplasmic side of the membrane. Residues 149-169 (LPFLIVAFIFLAMAVWWEMFI) traverse the membrane as a helical segment. One can recognise an ABC transmembrane type-1 domain in the interval 152 to 435 (LIVAFIFLAM…LVYMYGDMLS (284 aa)). Topologically, residues 170–187 (PHYSGRVIDILGGDFDPD) are lumenal. The chain crosses the membrane as a helical span at residues 188-208 (AFASAIFFMCLFSVGSSLSAG). The Cytoplasmic portion of the chain corresponds to 209 to 266 (CRGGSFLFAESRINLRIREQLFSSLLRQDLAFFQETKTGELNSRLSSDTSLMSQWLSL). A helical transmembrane segment spans residues 267-287 (NANILLRSLVKVVGLYYFMLQ). The Lumenal segment spans residues 288-293 (VSPRLT). The helical transmembrane segment at 294-314 (FLSLLDLPLTIAAEKVYNPRH) threads the bilayer. The interval 301 to 389 (PLTIAAEKVY…QRVMALGMQV (89 aa)) is part of the peptide-binding site. Over 315 to 374 (QAVLKEIQDAVAKAGQVVREAVGGLQTVRSFGAEEQEVRRYKEALERCRQLWWRRDLEKS) the chain is Cytoplasmic. The helical transmembrane segment at 375 to 395 (LYLVIQRVMALGMQVLILNVG) threads the bilayer. The Lumenal portion of the chain corresponds to 396 to 408 (VQQILAGEVTRGG). A helical transmembrane segment spans residues 409–429 (LLSFLLYQEEVGHHVQNLVYM). The tract at residues 414-433 (LYQEEVGHHVQNLVYMYGDM) is part of the peptide-binding site. Residues 430 to 703 (YGDMLSNVGA…AHLVQQRLEA (274 aa)) lie on the Cytoplasmic side of the membrane. The ABC transporter domain maps to 468–702 (VEFQDVSFSY…YAHLVQQRLE (235 aa)). ATP is bound at residue 503–510 (GPNGSGKS).

It belongs to the ABC transporter superfamily. ABCB family. MHC peptide exporter (TC 3.A.1.209) subfamily. Heterodimer of TAP1 and TAP2 (TAP1-TAP2). A component of the peptide loading complex (PLC), interacts via TAPBP with MHCI heterodimer; this interaction mediates peptide-MHCI assembly. The cofactor is Mg(2+).

Its subcellular location is the endoplasmic reticulum membrane. The enzyme catalyses a peptide antigen(in) + ATP + H2O = a peptide antigen(out) + ADP + phosphate + H(+). Functionally, ABC transporter associated with antigen processing. In complex with TAP1 mediates unidirectional translocation of peptide antigens from cytosol to endoplasmic reticulum (ER) for loading onto MHC class I (MHCI) molecules. Uses the chemical energy of ATP to export peptides against the concentration gradient. During the transport cycle alternates between 'inward-facing' state with peptide binding site facing the cytosol to 'outward-facing' state with peptide binding site facing the ER lumen. Peptide antigen binding to ATP-loaded TAP1-TAP2 induces a switch to hydrolysis-competent 'outward-facing' conformation ready for peptide loading onto nascent MHCI molecules. Subsequently ATP hydrolysis resets the transporter to the 'inward facing' state for a new cycle. As a component of the peptide loading complex (PLC), acts as a molecular scaffold essential for peptide-MHCI assembly and antigen presentation. The chain is Antigen peptide transporter 2 (Tap2) from Rattus norvegicus (Rat).